The primary structure comprises 47 residues: MAKGKRTFQPNNRRRARVHGFRTRMRTRAGRAIVSARRNKGRKSLTA.

It belongs to the bacterial ribosomal protein bL34 family.

The protein is Large ribosomal subunit protein bL34 of Corynebacterium jeikeium (strain K411).